Here is a 373-residue protein sequence, read N- to C-terminus: Anhydro-N-acetylmuramic acid kinase (373 aa).

12 to 19 (GTSLDGVD) is a binding site for ATP.

It belongs to the anhydro-N-acetylmuramic acid kinase family.

It catalyses the reaction 1,6-anhydro-N-acetyl-beta-muramate + ATP + H2O = N-acetyl-D-muramate 6-phosphate + ADP + H(+). The protein operates within amino-sugar metabolism; 1,6-anhydro-N-acetylmuramate degradation. It functions in the pathway cell wall biogenesis; peptidoglycan recycling. In terms of biological role, catalyzes the specific phosphorylation of 1,6-anhydro-N-acetylmuramic acid (anhMurNAc) with the simultaneous cleavage of the 1,6-anhydro ring, generating MurNAc-6-P. Is required for the utilization of anhMurNAc either imported from the medium or derived from its own cell wall murein, and thus plays a role in cell wall recycling. This chain is Anhydro-N-acetylmuramic acid kinase, found in Salmonella agona (strain SL483).